The chain runs to 447 residues: Na(+)-translocating NADH-quinone reductase subunit A (447 aa).

This sequence belongs to the NqrA family. Composed of six subunits; NqrA, NqrB, NqrC, NqrD, NqrE and NqrF.

It carries out the reaction a ubiquinone + n Na(+)(in) + NADH + H(+) = a ubiquinol + n Na(+)(out) + NAD(+). Functionally, NQR complex catalyzes the reduction of ubiquinone-1 to ubiquinol by two successive reactions, coupled with the transport of Na(+) ions from the cytoplasm to the periplasm. NqrA to NqrE are probably involved in the second step, the conversion of ubisemiquinone to ubiquinol. The sequence is that of Na(+)-translocating NADH-quinone reductase subunit A from Hahella chejuensis (strain KCTC 2396).